The chain runs to 247 residues: Chymase (247 aa).

The signal sequence occupies residues 1 to 19 (MNLHALCLLLLLLGSSTKA). The propeptide at 20–21 (GE) is activation peptide. A Peptidase S1 domain is found at 22–245 (IIGGTECIPH…YRPWINKILR (224 aa)). A disulfide bond links Cys-51 and Cys-67. His-66 functions as the Charge relay system in the catalytic mechanism. N-linked (GlcNAc...) asparagine glycosylation occurs at Asn-80. The active-site Charge relay system is the Asp-110. 2 disulfides stabilise this stretch: Cys-144–Cys-209 and Cys-175–Cys-188. Catalysis depends on Ser-203, which acts as the Charge relay system.

The protein belongs to the peptidase S1 family. Granzyme subfamily. Mast cells.

It localises to the secreted. The protein localises to the cytoplasmic granule. The enzyme catalyses Preferential cleavage: Phe-|-Xaa &gt; Tyr-|-Xaa &gt; Trp-|-Xaa &gt; Leu-|-Xaa.. Its function is as follows. Major secreted protease of mast cells with suspected roles in vasoactive peptide generation, extracellular matrix degradation, and regulation of gland secretion. The polypeptide is Chymase (Cma1) (Rattus norvegicus (Rat)).